Here is a 346-residue protein sequence, read N- to C-terminus: D-alanine--D-alanine ligase (346 aa).

The region spanning 133–324 is the ATP-grasp domain; sequence KLYAQSVGVK…IVDNLAKNIE (192 aa). 159–211 is a binding site for ATP; sequence LSFPCILKPARLGSSIGISIVKDESELKYAKDVAFEFDEDVVVEQFVSNIKEY. Mg(2+)-binding residues include Asp-284, Glu-296, and Asn-298.

This sequence belongs to the D-alanine--D-alanine ligase family. Mg(2+) is required as a cofactor. Requires Mn(2+) as cofactor.

It localises to the cytoplasm. It catalyses the reaction 2 D-alanine + ATP = D-alanyl-D-alanine + ADP + phosphate + H(+). Its pathway is cell wall biogenesis; peptidoglycan biosynthesis. Its function is as follows. Cell wall formation. This chain is D-alanine--D-alanine ligase, found in Campylobacter lari (strain RM2100 / D67 / ATCC BAA-1060).